The sequence spans 337 residues: G-protein coupled receptor 26 (337 aa).

Over 1-10 (MNSWDAGLAG) the chain is Extracellular. A helical membrane pass occupies residues 11 to 31 (LLVGTMGVSLLSNALVLLCLL). The Cytoplasmic portion of the chain corresponds to 32–47 (HSADIRRQAPALFTLN). A helical transmembrane segment spans residues 48-68 (LTCGNLLCTVVNMPLTLAGVV). The Extracellular segment spans residues 69-81 (AQRQPAGDRLCRL). A disulfide bridge links C79 with C156. A helical transmembrane segment spans residues 82–102 (AAFLDTFLAANSMLSMAALSI). At 103–123 (DRWVAVVFPLSYRAKMRLRDA) the chain is on the cytoplasmic side. Residues 124–144 (ALMVAYTWLHALTFPAAALAL) form a helical membrane-spanning segment. Over 145–168 (SWLGFHQLYASCTLCSRRPDERLR) the chain is Extracellular. A helical membrane pass occupies residues 169 to 189 (FAVFTGAFHALSFLLSFVVLC). Residues 190–245 (CTYLKVLKVARFHCKRIDVITMQTLVLLVDLHPSVRERCLEEQKRRRQRATKKIST) are Cytoplasmic-facing. A helical transmembrane segment spans residues 246–266 (FIGTFLVCFAPYVITRLVELF). Over 267 to 276 (STVPIGSHWG) the chain is Extracellular. A helical membrane pass occupies residues 277-297 (VLSKCLAYSKAASDPFVYSLL). The Cytoplasmic portion of the chain corresponds to 298–337 (RHQYRKSCKEILNRLLHRRSIHSSGLTGDSHSQNILPVSE).

Belongs to the G-protein coupled receptor 1 family. In terms of tissue distribution, highly expressed in the CNS, the highest expression is seen in the amygdala, hippocampus and thalamus. Weak expression is detected in testis. Down-regulated in glioblastoma.

It localises to the cell membrane. Orphan receptor. Displays a significant level of constitutive activity. Its effect is mediated by G(s)-alpha protein that stimulate adenylate cyclase, resulting in an elevation of intracellular cAMP. The protein is G-protein coupled receptor 26 (GPR26) of Homo sapiens (Human).